Consider the following 355-residue polypeptide: Anthranilate phosphoribosyltransferase (355 aa).

Residues G102, 105 to 106 (GD), S110, 112 to 115 (NIST), 130 to 138 (KHGNRSVSS), and S142 contribute to the 5-phospho-alpha-D-ribose 1-diphosphate site. Position 102 (G102) interacts with anthranilate. S114 lines the Mg(2+) pocket. Anthranilate is bound at residue N133. An anthranilate-binding site is contributed by R188. Residues D246 and E247 each contribute to the Mg(2+) site.

It belongs to the anthranilate phosphoribosyltransferase family. As to quaternary structure, homodimer. It depends on Mg(2+) as a cofactor.

The catalysed reaction is N-(5-phospho-beta-D-ribosyl)anthranilate + diphosphate = 5-phospho-alpha-D-ribose 1-diphosphate + anthranilate. It functions in the pathway amino-acid biosynthesis; L-tryptophan biosynthesis; L-tryptophan from chorismate: step 2/5. Catalyzes the transfer of the phosphoribosyl group of 5-phosphorylribose-1-pyrophosphate (PRPP) to anthranilate to yield N-(5'-phosphoribosyl)-anthranilate (PRA). The chain is Anthranilate phosphoribosyltransferase from Pectobacterium atrosepticum (strain SCRI 1043 / ATCC BAA-672) (Erwinia carotovora subsp. atroseptica).